The sequence spans 258 residues: Imidazole glycerol phosphate synthase subunit HisF (258 aa).

Active-site residues include aspartate 11 and aspartate 130.

The protein belongs to the HisA/HisF family. Heterodimer of HisH and HisF.

It localises to the cytoplasm. The catalysed reaction is 5-[(5-phospho-1-deoxy-D-ribulos-1-ylimino)methylamino]-1-(5-phospho-beta-D-ribosyl)imidazole-4-carboxamide + L-glutamine = D-erythro-1-(imidazol-4-yl)glycerol 3-phosphate + 5-amino-1-(5-phospho-beta-D-ribosyl)imidazole-4-carboxamide + L-glutamate + H(+). Its pathway is amino-acid biosynthesis; L-histidine biosynthesis; L-histidine from 5-phospho-alpha-D-ribose 1-diphosphate: step 5/9. Its function is as follows. IGPS catalyzes the conversion of PRFAR and glutamine to IGP, AICAR and glutamate. The HisF subunit catalyzes the cyclization activity that produces IGP and AICAR from PRFAR using the ammonia provided by the HisH subunit. This Lachnoclostridium phytofermentans (strain ATCC 700394 / DSM 18823 / ISDg) (Clostridium phytofermentans) protein is Imidazole glycerol phosphate synthase subunit HisF.